We begin with the raw amino-acid sequence, 382 residues long: Protein NASP homolog 1 (382 aa).

The interval 1–39 is disordered; that stretch reads MDTENIADASDIRVKDASGDSDEKGNGTTTEEETVEQKE. Basic and acidic residues predominate over residues 10–25; the sequence is SDIRVKDASGDSDEKG. One copy of the TPR 1 repeat lies at 42-75; sequence LAELLAAGRRALKVNDIDKASDSLSEATELSSEI. Residues 103–112 show a composition bias toward basic and acidic residues; sequence QLLKGPGEKE. The disordered stretch occupies residues 103–151; that stretch reads QLLKGPGEKESGDEEQAGNSDDKTDEENGETEKEDGEESGEEEDDDDDT. Residues 125 to 150 show a composition bias toward acidic residues; the sequence is KTDEENGETEKEDGEESGEEEDDDDD. TPR repeat units lie at residues 191–224 and 233–266; these read ADVL…QRNV and AQTY…LIAR. A coiled-coil region spans residues 264-304; it reads IARQTELKHELERGVDDKEKKSEFENELKELEEMMPGVEEM. Positions 337 to 382 are disordered; it reads PQEAGDQKEANDISSLVRRPAKRAVDAPTDNQAVKKEKEEEGTTSI. Residues 369–382 show a composition bias toward basic and acidic residues; the sequence is AVKKEKEEEGTTSI.

The protein belongs to the NASP family. In terms of assembly, may interact with zinc finger protein tra-4 and histone deacetylase hda-1.

It is found in the nucleus. Promotes normal hermaphrodite (XX) development, in concert with zinc finger protein tra-4 and histone deacetylase hda-1, perhaps as components of a complex. May act redundantly with nasp-2. Involved in innate immune response to B.thuringiensis strain DB27 and S.aureus bacteria. May play a role in the uptake or spreading of dsRNA. The polypeptide is Protein NASP homolog 1 (Caenorhabditis elegans).